The primary structure comprises 435 residues: Tyrosine-protein phosphatase non-receptor type 1 (435 aa).

M1 is subject to N-acetylmethionine. The 275-residue stretch at 3 to 277 (MEKEFEQIDK…RFSYLAVIEG (275 aa)) folds into the Tyrosine-protein phosphatase domain. Residue Y20 is modified to Phosphotyrosine. S50 carries the post-translational modification Phosphoserine; by PKB/AKT1, CLK1 and CLK2. Y66 is subject to Phosphotyrosine; by EGFR. Substrate is bound by residues D181 and 215-221 (CSAGIGR). Catalysis depends on C215, which acts as the Phosphocysteine intermediate. At C215 the chain carries Cysteine persulfide; alternate. The residue at position 215 (C215) is a Cysteine sulfenic acid (-SOH); alternate. C215 carries the post-translational modification Cysteine sulfinic acid (-SO2H); alternate. C215 bears the S-nitrosocysteine; in reversibly inhibited form mark. The segment at residues 215–216 (CS) is a cross-link (n,N-(cysteine-1,S-diyl)serine (Cys-Ser); in inhibited form). Phosphoserine; by CLK1 and CLK2 is present on residues S242 and S243. Q262 is a substrate binding site. Basic and acidic residues predominate over residues 338–351 (TQEDKDCPIKEEKG). The interval 338–359 (TQEDKDCPIKEEKGSPLNAAPY) is disordered. Phosphoserine is present on residues S352, S363, and S365. Phosphothreonine is present on T368. The residue at position 378 (S378) is a Phosphoserine; by PKC. Residues 378–398 (SLRGAQAASPAKGEPSLPEKD) form a disordered region. Position 386 is a phosphoserine; by CDK1 (S386).

The protein belongs to the protein-tyrosine phosphatase family. Non-receptor class 1 subfamily. In terms of assembly, interacts with EPHA3 (phosphorylated); dephosphorylates EPHA3 and may regulate its trafficking and function. Interacts with MET. Interacts with NCK1. In terms of processing, oxidized on Cys-215; the Cys-SOH formed in response to redox signaling reacts with the alpha-amido of the following residue to form a sulfenamide cross-link, triggering a conformational change that inhibits substrate binding and activity. The active site can be restored by reduction. Ser-50 is the major site of phosphorylation as compared to Ser-242 and Ser-243. Activated by phosphorylation at Ser-50. Post-translationally, S-nitrosylation of Cys-215 inactivates the enzyme activity. In terms of processing, sulfhydration at Cys-215 following endoplasmic reticulum stress inactivates the enzyme activity, promoting EIF2AK3/PERK activity. In terms of tissue distribution, expressed in keratinocytes (at protein level).

Its subcellular location is the endoplasmic reticulum membrane. It carries out the reaction O-phospho-L-tyrosyl-[protein] + H2O = L-tyrosyl-[protein] + phosphate. Tyrosine-protein phosphatase which acts as a regulator of endoplasmic reticulum unfolded protein response. Mediates dephosphorylation of EIF2AK3/PERK; inactivating the protein kinase activity of EIF2AK3/PERK. May play an important role in CKII- and p60c-src-induced signal transduction cascades. May regulate the EFNA5-EPHA3 signaling pathway which modulates cell reorganization and cell-cell repulsion. May also regulate the hepatocyte growth factor receptor signaling pathway through dephosphorylation of MET. This is Tyrosine-protein phosphatase non-receptor type 1 (PTPN1) from Homo sapiens (Human).